We begin with the raw amino-acid sequence, 130 residues long: uncharacterized protein (130 aa).

This is an uncharacterized protein from Saccharomyces cerevisiae (strain ATCC 204508 / S288c) (Baker's yeast).